We begin with the raw amino-acid sequence, 145 residues long: Group IID secretory phospholipase A2 (145 aa).

The first 20 residues, 1-20, serve as a signal peptide directing secretion; sequence MELALLCGLVVMAGVIPIQG. Cystine bridges form between Cys46/Cys138, Cys48/Cys64, Cys63/Cys118, Cys69/Cys145, Cys70/Cys111, Cys79/Cys104, and Cys97/Cys109. Ca(2+)-binding residues include His47, Gly49, and Gly51. His67 is an active-site residue. Position 68 (Asp68) interacts with Ca(2+). Asn89 is a glycosylation site (N-linked (GlcNAc...) asparagine). Residue Asp112 is part of the active site.

This sequence belongs to the phospholipase A2 family. Requires Ca(2+) as cofactor. Highly expressed in pancreas and spleen and less abundantly in colon, thymus, placenta, small intestine, and prostate.

The protein localises to the secreted. It carries out the reaction a 1,2-diacyl-sn-glycero-3-phosphoethanolamine + H2O = a 1-acyl-sn-glycero-3-phosphoethanolamine + a fatty acid + H(+). It catalyses the reaction 1-hexadecanoyl-2-(9Z-octadecenoyl)-sn-glycero-3-phosphoethanolamine + H2O = 1-hexadecanoyl-sn-glycero-3-phosphoethanolamine + (9Z)-octadecenoate + H(+). The enzyme catalyses 1-hexadecanoyl-2-(9Z,12Z-octadecadienoyl)-sn-glycero-3-phosphoethanolamine + H2O = 1-hexadecanoyl-sn-glycero-3-phosphoethanolamine + (9Z,12Z)-octadecadienoate + H(+). The catalysed reaction is 1,2-dihexadecanoyl-sn-glycero-3-phospho-(1'-sn-glycerol) + H2O = 1-hexadecanoyl-sn-glycero-3-phospho-(1'-sn-glycerol) + hexadecanoate + H(+). It carries out the reaction 1-hexadecanoyl-2-(9Z-octadecenoyl)-sn-glycero-3-phospho-(1'-sn-glycerol) + H2O = 1-hexadecanoyl-sn-glycero-3-phospho-(1'-sn-glycerol) + (9Z)-octadecenoate + H(+). It catalyses the reaction a 1,2-diacyl-sn-glycero-3-phosphocholine + H2O = a 1-acyl-sn-glycero-3-phosphocholine + a fatty acid + H(+). The enzyme catalyses 1,2-dihexadecanoyl-sn-glycero-3-phosphocholine + H2O = 1-hexadecanoyl-sn-glycero-3-phosphocholine + hexadecanoate + H(+). The catalysed reaction is 1-hexadecanoyl-2-(9Z-octadecenoyl)-sn-glycero-3-phosphocholine + H2O = 1-hexadecanoyl-sn-glycero-3-phosphocholine + (9Z)-octadecenoate + H(+). It carries out the reaction 1-hexadecanoyl-2-(9Z,12Z-octadecadienoyl)-sn-glycero-3-phosphocholine + H2O = (9Z,12Z)-octadecadienoate + 1-hexadecanoyl-sn-glycero-3-phosphocholine + H(+). It catalyses the reaction 1-hexadecanoyl-2-(4Z,7Z,10Z,13Z,16Z,19Z-docosahexaenoyl)-sn-glycero-3-phosphocholine + H2O = (4Z,7Z,10Z,13Z,16Z,19Z)-docosahexaenoate + 1-hexadecanoyl-sn-glycero-3-phosphocholine + H(+). In terms of biological role, secretory calcium-dependent phospholipase A2 that primarily targets extracellular lipids, exerting anti-inflammatory and immunosuppressive functions. Hydrolyzes the ester bond of the fatty acyl group attached at sn-2 position of phospholipids (phospholipase A2 activity) with preference for phosphatidylethanolamines and phosphatidylglycerols over phosphatidylcholines. In draining lymph nodes, selectively hydrolyzes diacyl and alkenyl forms of phosphatidylethanolamines, releasing omega-3 polyunsaturated fatty acids (PUFAs) such as eicosapentaenoate and docosahexaenoate that are precursors of the anti-inflammatory lipid mediators, resolvins. During the resolution phase of acute inflammation drives docosahexaenoate-derived resolvin D1 synthesis, which suppresses dendritic cell activation and T-helper 1 immune response. May act in an autocrine and paracrine manner. Via a mechanism independent of its catalytic activity, promotes differentiation of regulatory T cells (Tregs) and participates in the maintenance of immune tolerance. May contribute to lipid remodeling of cellular membranes and generation of lipid mediators involved in pathogen clearance. Displays bactericidal activity against Gram-positive bacteria by directly hydrolyzing phospholipids of the bacterial membrane. This is Group IID secretory phospholipase A2 (PLA2G2D) from Homo sapiens (Human).